The primary structure comprises 3019 residues: Genome polyprotein (3019 aa).

Serine 2 is subject to N-acetylserine; by host. Residues 2–23 (STLPKPQRKTKRNTNRRPMDVK) are interaction with STAT1. Residues 2 to 58 (STLPKPQRKTKRNTNRRPMDVKFPGGGQIVGGVYLLPRRGPRLGVRATRKTSERSQP) form an interaction with EIF2AK2/PKR region. Residues 2–59 (STLPKPQRKTKRNTNRRPMDVKFPGGGQIVGGVYLLPRRGPRLGVRATRKTSERSQPR) are interaction with DDX3X. Residues 2–75 (STLPKPQRKT…PKARQPQGRH (74 aa)) are disordered. Residues 2 to 168 (STLPKPQRKT…EDGINYATGN (167 aa)) lie on the Cytoplasmic side of the membrane. Short sequence motifs (nuclear localization signal) lie at residues 5 to 13 (PKPQRKTKR) and 38 to 43 (PRRGPR). Basic residues predominate over residues 7 to 16 (PQRKTKRNTN). The segment covering 32 to 47 (GGVYLLPRRGPRLGVR) has biased composition (low complexity). Serine 53 bears the Phosphoserine; by host mark. 2 short sequence motifs (nuclear localization signal) span residues 58–64 (PRGRRQP) and 66–71 (PKARQP). Serine 99 bears the Phosphoserine; by host mark. The important for endoplasmic reticulum and mitochondrial localization stretch occupies residues 112 to 152 (PRRRSRNLGKVIDTLTCGFADLMGYIPVVGAPLGGVAAALA). Phosphoserine; by host PKA is present on serine 116. The interval 122 to 173 (VIDTLTCGFADLMGYIPVVGAPLGGVAAALAHGVRAIEDGINYATGNLPGCS) is interaction with APOA2. An important for lipid droplets localization region spans residues 164–167 (YATG). A helical transmembrane segment spans residues 169–189 (LPGCSFSIFLLALLSCLTTPA). A propeptide spans 178–191 (LLALLSCLTTPASA) (ER anchor for the core protein, removed in mature form by host signal peptidase). Over 190–358 (SALTYGNSSG…FGGHWGILLA (169 aa)) the chain is Lumenal. Asparagine 196, asparagine 209, asparagine 234, and asparagine 250 each carry an N-linked (GlcNAc...) asparagine; by host glycan. Residues 265–296 (LAGAAVVCSSLYIGDLCGSLFLAGQLFTFQPR) are important for fusion. Residue asparagine 305 is glycosylated (N-linked (GlcNAc...) asparagine; by host). Residues 359–379 (VAYFGMAGNWLKVLAVLFLFA) traverse the membrane as a helical segment. Over 380–730 (GVEATTTVGH…WEYIVLMFLV (351 aa)) the chain is Lumenal. The segment at 385-411 (TTVGHGVARTTAGITGLFSPGASQNLQ) is HVR1. N-linked (GlcNAc...) asparagine; by host glycosylation is present at asparagine 415. 2 N-linked (GlcNAc...) (high mannose) asparagine; by host glycosylation sites follow: asparagine 422 and asparagine 429. 4 cysteine pairs are disulfide-bonded: cysteine 428–cysteine 553, cysteine 451–cysteine 458, cysteine 487–cysteine 495, and cysteine 504–cysteine 509. A glycan (N-linked (GlcNAc...) asparagine; by host) is linked at asparagine 447. Positions 474 to 479 (KVNISG) are HVR2. Asparagine 476 carries N-linked (GlcNAc...) asparagine; by host glycosylation. The segment at 481 to 494 (SDDRPYCWHYAPRP) is CD81-binding 1. Residue asparagine 533 is glycosylated (N-linked (GlcNAc...) asparagine; by host). Residues 545–552 (PPTGGWFG) form a CD81-binding 2 region. N-linked (GlcNAc...) asparagine; by host glycosylation occurs at asparagine 557. Cysteine 565 and cysteine 570 form a disulfide bridge. Asparagine 578 carries an N-linked (GlcNAc...) asparagine; by host glycan. Intrachain disulfides connect cysteine 586/cysteine 590, cysteine 602/cysteine 625, and cysteine 612/cysteine 649. N-linked (GlcNAc...) (high mannose) asparagine; by host glycans are attached at residues asparagine 628 and asparagine 650. Cysteines 657 and 682 form a disulfide. Positions 665–676 (IEMSPLLFSTTQ) are PKR/eIF2-alpha phosphorylation homology domain (PePHD). A helical membrane pass occupies residues 731–751 (LADARICTCLWLMLLISNVEA). Over 752–762 (AVERLVVLNAA) the chain is Lumenal. The chain crosses the membrane as a helical span at residues 763-783 (SAAGTAGWWWAVLFLCCVWYV). Over 784 to 786 (KGR) the chain is Cytoplasmic. A helical transmembrane segment spans residues 787-808 (LVPACTYMALGMWPLLLTILAL). Over 809–818 (PHRAYAMDNE) the chain is Lumenal. The chain crosses the membrane as a helical span at residues 819–839 (QAASLGAVGLLAITIFTITPT). Topologically, residues 840–843 (YKKL) are cytoplasmic. The helical transmembrane segment at 844–863 (LTCFIWWNQYFLARAEAMVH) threads the bilayer. Topologically, residues 864 to 886 (EWVPDLRVRGGRDSIILLTCLLH) are lumenal. A helical transmembrane segment spans residues 887–907 (PQLGFEVTKILLAILAPLYIL). A Peptidase C18 domain is found at 908–1031 (QYSLLKVPYF…DMQRGGWKLL (124 aa)). The Cytoplasmic portion of the chain corresponds to 908 to 1662 (QYSLLKVPYF…CMSADLEVIT (755 aa)). The protease NS2-3 stretch occupies residues 909 to 1211 (YSLLKVPYFV…PVENMETTMR (303 aa)). Cysteine 927 carries the S-palmitoyl cysteine; by host lipid modification. The interval 934–954 (AGGRYVQACLLRLGAWTGTFI) is interaction with host SCPS1. Residues histidine 957, glutamate 977, and cysteine 998 each act as for protease NS2 activity; shared with dimeric partner in the active site. Residues 1032–1213 (APITAYAQQT…ENMETTMRSP (182 aa)) form the Peptidase S29 domain. Active-site charge relay system; for serine protease NS3 activity residues include histidine 1088 and aspartate 1112. 2 residues coordinate Zn(2+): cysteine 1128 and cysteine 1130. Serine 1170 acts as the Charge relay system; for serine protease NS3 activity in catalysis. Residues cysteine 1176 and histidine 1180 each contribute to the Zn(2+) site. Residues 1222–1374 (PAVPQTYQVG…PNITETALPT (153 aa)) enclose the Helicase ATP-binding domain. ATP is bound at residue 1235 to 1242 (APTGSGKS). Mg(2+)-binding residues include serine 1242 and glutamate 1322. The DECH box signature appears at 1321 to 1324 (DECH). The tract at residues 1491–1503 (QRRGRTGRGKPGV) is RNA-binding. The chain crosses the membrane as a helical span at residues 1663–1683 (STWVLVGGVLAALAAYCLSVG). Residues 1684–1695 (CVVICGRITLTG) form an NS3-binding region. Residues 1684 to 1810 (CVVICGRITL…SLTSPLRTSQ (127 aa)) lie on the Cytoplasmic side of the membrane. A helical membrane pass occupies residues 1811 to 1829 (TLLLNILGGWIAAQVAPPP). The Lumenal portion of the chain corresponds to 1830–1833 (ASTA). The chain crosses the membrane as a helical span at residues 1834–1854 (FVVSGLAGAAVGSIRLGRVLV). A topological domain (cytoplasmic) is located at residue aspartate 1855. Residues 1856–1876 (VLAGYGAGVSGALVAFKIMSG) traverse the membrane as a helical segment. Over 1877-1886 (DCPTTEDMVN) the chain is Lumenal. A helical membrane pass occupies residues 1887–1907 (LLPALLSPGALVVGVVCAAIL). Over 1908–1977 (RRHVGPAEGA…WVNEDTATPC (70 aa)) the chain is Cytoplasmic. Residue cysteine 1977 is the site of S-palmitoyl cysteine; by host attachment. Residues 1978–2007 (ATSWLRDVWDWVCTVLSDFKVWLQAKLFPR) lie within the membrane without spanning it. At 2008–2998 (LPGIPFLSCQ…YHSVSQARPR (991 aa)) the chain is on the cytoplasmic side. Zn(2+)-binding residues include cysteine 2016, cysteine 2034, cysteine 2036, and cysteine 2057. The tract at residues 2125 to 2213 (EFFTEVDGVR…ASSSASQLSA (89 aa)) is FKBP8-binding. The segment at 2125 to 2338 (EFFTEVDGVR…PIPPPRRKRL (214 aa)) is transcriptional activation. The segment at 2140–2144 (PPCKP) is interaction with non-structural protein 4A. The segment at 2189 to 2223 (ETASRRLKRGSPPSLASSSASQLSAPSLKATCTTS) is disordered. Residues 2194–2446 (RLKRGSPPSL…ALITPCAAEE (253 aa)) are interaction with host SKP2. A Phosphoserine; by host; in p56 modification is found at serine 2199. The span at 2199-2216 (SPPSLASSSASQLSAPSL) shows a compositional bias: low complexity. Serine 2202, serine 2206, serine 2209, serine 2212, and serine 2215 each carry phosphoserine; by host; in p58. An ISDR region spans residues 2215 to 2254 (SLKATCTTSKDHPDMELIEANLLWRQEMGGNITRVESENK). Residues 2215–2280 (SLKATCTTSK…REISVSAECH (66 aa)) form an interaction with EIF2AK2/PKR region. An NS4B-binding region spans residues 2254-2312 (KVVVLDSFEPLTAEYDEREISVSAECHRPPRHKFPPALPIWARPDYNPPLLQAWQMPGY). The V3 stretch occupies residues 2305–2383 (QAWQMPGYEP…SITSPDPPAP (79 aa)). An SH3-binding motif is present at residues 2328-2331 (APIP). The short motif at 2333-2341 (PRRKRLVHL) is the Nuclear localization signal element. Residue lysine 2356 forms a Glycyl lysine isopeptide (Lys-Gly) (interchain with G-Cter in ubiquitin) linkage. Positions 2359–2418 (VEGSSDPGPSSDSGLSITSPDPPAPTTPDDACSEAESYSSMPPLEGEPGDPDLSSGSWST) are disordered. Over residues 2361–2372 (GSSDPGPSSDSG) the composition is skewed to low complexity. Serine 2457 and serine 2470 each carry phosphoserine; by host. The RdRp catalytic domain occupies 2642 to 2760 (PMGFSYDTRC…ICESAGVQED (119 aa)). Mg(2+)-binding residues include aspartate 2648, aspartate 2746, and aspartate 2747. The chain crosses the membrane as a helical span at residues 2999–3019 (LLLLGLLLLTVGVGIFLVPAR).

It belongs to the hepacivirus polyprotein family. In terms of assembly, homooligomer. Interacts with E1 (via C-terminus). Interacts with the non-structural protein 5A. Interacts (via N-terminus) with host STAT1 (via SH2 domain); this interaction results in decreased STAT1 phosphorylation and ubiquitin-mediated proteasome-dependent STAT1 degradation, leading to decreased IFN-stimulated gene transcription. Interacts with host STAT3; this interaction constitutively activates STAT3. Interacts with host LTBR receptor. Interacts with host TNFRSF1A receptor and possibly induces apoptosis. Interacts with host HNRPK. Interacts with host YWHAE. Interacts with host UBE3A/E6AP. Interacts with host DDX3X. Interacts with host APOA2. Interacts with host RXRA protein. Interacts with host SP110 isoform 3/Sp110b; this interaction sequesters the transcriptional corepressor SP110 away from the nucleus. Interacts with host CREB3 nuclear transcription protein; this interaction triggers cell transformation. Interacts with host ACY3. Interacts with host C1QR1. Interacts with host RBM24; this interaction, which enhances the interaction of the mature core protein with 5'-UTR, may inhibit viral translation and favor replication. Interacts with host EIF2AK2/PKR; this interaction induces the autophosphorylation of EIF2AK2. Part of the viral assembly initiation complex composed of NS2, E1, E2, NS3, NS4A, NS5A and the mature core protein. Forms a heterodimer with envelope glycoprotein E2. Interacts with mature core protein. Interacts with protease NS2. The heterodimer E1/E2 interacts with host CLDN1; this interaction plays a role in viral entry into host cell. Interacts with host SPSB2 (via C-terminus). Part of the viral assembly initiation complex composed of NS2, E1, E2, NS3, NS4A, NS5A and the mature core protein. Interacts with host NEURL3; this interaction prevents E1 binding to glycoprotein E2. As to quaternary structure, forms a heterodimer with envelope glycoprotein E1. Interacts with host CD81 and SCARB1 receptors; these interactions play a role in viral entry into host cell. Interacts with host EIF2AK2/PKR; this interaction inhibits EIF2AK2 and probably allows the virus to evade the innate immune response. Interacts with host CD209/DC-SIGN and CLEC4M/DC-SIGNR. Interact with host SPCS1; this interaction is essential for viral particle assembly. Interacts with protease NS2. The heterodimer E1/E2 interacts with host CLDN1; this interaction plays a role in viral entry into host cell. Part of the viral assembly initiation complex composed of NS2, E1, E2, NS3, NS4A, NS5A and the mature core protein. Interacts with host SLC3A2/4F2hc; the interaction may facilitate viral entry into host cell. Interacts with human PLSCR1. In terms of assembly, homohexamer. Homoheptamer. Interacts with protease NS2. Homodimer. Interacts with host SPCS1; this interaction is essential for viral particle assembly. Interacts with envelope glycoprotein E1. Interacts with envelope glycoprotein E2. Interacts with viroporin p7. Interacts with serine protease/helicase NS3. Part of the replication complex composed of NS2, NS3, NS4A, NS4B, NS5A and the RNA-directed RNA polymerase embedded in an ER-derived membranous web. Part of the viral assembly initiation complex composed of NS2, E1, E2, NS3, NS4A, NS5A and the mature core protein. As to quaternary structure, interacts with protease NS2. Interacts with non-structural protein 4A; this interaction stabilizes the folding of NS3 serine protease. NS3-NS4A interaction is essential for NS3 activation and allows membrane anchorage of the latter. NS3/NS4A complex also prevents phosphorylation of host IRF3, thus preventing the establishment of dsRNA induced antiviral state. Interacts with host MAVS; this interaction leads to the cleavage and inhibition of host MAVS. Interacts with host TICAM1; this interaction leads to the cleavage and inhibition of host TICAM1. Interacts with host TANK-binding kinase/TBK1; this interaction results in the inhibition of the association between TBK1 and IRF3, which leads to the inhibition of IRF3 activation. Interacts with host RBM24. Part of the replication complex composed of NS2, NS3, NS4A, NS4B, NS5A and the RNA-directed RNA polymerase embedded in an ER-derived membranous web. Part of the viral assembly initiation complex composed of NS2, E1, E2, NS3, NS4A, NS5A and the mature core protein. In terms of assembly, interacts with NS3 serine protease; this interaction stabilizes the folding of NS3 serine protease. NS3-NS4A interaction is essential for NS3 activation and allows membrane anchorage of the latter. Interacts with non-structural protein 5A (via N-terminus). Part of the replication complex composed of NS2, NS3, NS4A, NS4B, NS5A and the RNA-directed RNA polymerase embedded in an ER-derived membranous web. Part of the viral assembly initiation complex composed of NS2, E1, E2, NS3, NS4A, NS5A and the mature core protein. Homomultimer. Interacts with non-structural protein NS5A. Interacts with host PLA2G4C; this interaction likely initiates the recruitment of replication complexes to lipid droplets. Interacts with host STING; this interaction disrupts the interaction between STING and TBK1 thereby suppressing the interferon signaling. Part of the replication complex composed of NS2, NS3, NS4A, NS4B, NS5A and the RNA-directed RNA polymerase embedded in an ER-derived membranous web. As to quaternary structure, monomer. Homodimer; dimerization is required for RNA-binding. Interacts with the mature core protein. Interacts (via N-terminus) with non-structural protein 4A. Interacts with non-structural protein 4B. Interacts (via region D2) with RNA-directed RNA polymerase. Part of the viral assembly initiation complex composed of NS2, E1, E2, NS3, NS4A, NS5A and the mature core protein. Part of the replication complex composed of NS2, NS3, NS4A, NS4B, NS5A and the RNA-directed RNA polymerase embedded in an ER-derived membranous web. Interacts with host GRB2. Interacts with host BIN1. Interacts with host PIK3R1. Interacts with host SRCAP. Interacts with host FKBP8. Interacts (via C-terminus) with host VAPB (via MSP domain). Interacts with host EIF2AK2/PKR; this interaction leads to disruption of EIF2AK2 dimerization by NS5A and probably allows the virus to evade the innate immune response. Interacts (via N-terminus) with host PACSIN2 (via N-terminus); this interaction attenuates protein kinase C alpha-mediated phosphorylation of PACSIN2 by disrupting the interaction between PACSIN2 and PRKCA. Interacts (via N-terminus) with host SRC kinase (via SH2 domain). Interacts with most Src-family kinases. Interacts with host IFI27 and SKP2; promotes the ubiquitin-mediated proteasomal degradation of NS5A. Interacts with host GPS2. Interacts with host TNFRSF21; this interaction allows the modulation by the virus of JNK, p38 MAPK, STAT3, and Akt signaling pathways in a DR6-dependent manner. Interacts (via N-terminus) with host CIDEB (via N-terminus); this interaction seems to regulate the association of HCV particles with APOE. Interacts with host CHKA/Choline Kinase-alpha; CHKA bridges host PI4KA and NS5A and potentiates NS5A-stimulated PI4KA activity, which then facilitates the targeting of the ternary complex to the ER for viral replication. Interacts with host SPSB2 (via C-terminus); this interaction targets NS5A for ubiquitination and degradation. Interacts with host RAB18; this interaction may promote the association of NS5A and other replicase components with lipid droplets. Interacts (via region D2) with host PPIA/CYPA; the interaction stimulates RNA-binding ability of NS5A and is dependent on the peptidyl-prolyl cis-trans isomerase activity of PPIA/CYPA. Interacts with host TRIM14; this interaction induces the degradation of NS5A. In terms of assembly, homooligomer. Interacts with non-structural protein 5A. Interacts with host VAPB. Interacts with host PRK2/PKN2. Interacts with host HNRNPA1 and SEPT6; these interactions facilitate viral replication. Part of the replication complex composed of NS2, NS3, NS4A, NS4B, NS5A and the RNA-directed RNA polymerase. Zn(2+) is required as a cofactor. The cofactor is Mg(2+). In terms of processing, specific enzymatic cleavages in vivo yield mature proteins. The structural proteins, core, E1, E2 and p7 are produced by proteolytic processing by host signal peptidases. The core protein precursor is synthesized as a 23 kDa, which is retained in the ER membrane through the hydrophobic signal peptide. Cleavage by the signal peptidase releases the 21 kDa mature core protein. The cleavage of the core protein precursor occurs between aminoacids 176 and 188 but the exact cleavage site is not known. Some degraded forms of the core protein appear as well during the course of infection. The other proteins (p7, NS2, NS3, NS4A, NS4B, NS5A and NS5B) are cleaved by the viral proteases. Autoprocessing between NS2 and NS3 is mediated by the NS2 cysteine protease catalytic domain and regulated by the NS3 N-terminal domain. Post-translationally, phosphorylated by host PKC and PKA. Ubiquitinated; mediated by UBE3A and leading to core protein subsequent proteasomal degradation. In terms of processing, highly N-glycosylated. Post-translationally, palmitoylation is required for NS2/3 autoprocessing and E2 recruitment to membranes. Palmitoylated. This modification may play a role in its polymerization or in protein-protein interactions. In terms of processing, phosphorylated on serines in a basal form termed p56. p58 is a hyperphosphorylated form of p56. p56 and p58 coexist in the cell in roughly equivalent amounts. Hyperphosphorylation is dependent on the presence of NS4A. Host CSNK1A1/CKI-alpha or RPS6KB1 kinases may be responsible for NS5A phosphorylation. Post-translationally, tyrosine phosphorylation is essential for the interaction with host SRC. The N-terminus is phosphorylated by host PRK2/PKN2.

The protein localises to the host endoplasmic reticulum membrane. It localises to the host mitochondrion membrane. It is found in the virion. Its subcellular location is the host cytoplasm. The protein resides in the host nucleus. The protein localises to the host lipid droplet. It localises to the virion membrane. It is found in the host mitochondrion. Its subcellular location is the host cell membrane. The protein resides in the host perinuclear region. The enzyme catalyses Hydrolysis of four peptide bonds in the viral precursor polyprotein, commonly with Asp or Glu in the P6 position, Cys or Thr in P1 and Ser or Ala in P1'.. It carries out the reaction a ribonucleoside 5'-triphosphate + H2O = a ribonucleoside 5'-diphosphate + phosphate + H(+). The catalysed reaction is ATP + H2O = ADP + phosphate + H(+). It catalyses the reaction RNA(n) + a ribonucleoside 5'-triphosphate = RNA(n+1) + diphosphate. Its activity is regulated as follows. Inhibited by the antiviral drug hexamethylene amiloride. Inhibition by amantadine appears to be genotype-dependent. Also inhibited by long-alkyl-chain iminosugar derivatives. Activity is up-regulated by PRK2/PKN2-mediated phosphorylation. In terms of biological role, packages viral RNA to form a viral nucleocapsid, and promotes virion budding. Participates in the viral particle production as a result of its interaction with the non-structural protein 5A. Binds RNA and may function as a RNA chaperone to induce the RNA structural rearrangements taking place during virus replication. Modulates viral translation initiation by interacting with viral IRES and 40S ribosomal subunit. Affects various cell signaling pathways, host immunity and lipid metabolism. Prevents the establishment of cellular antiviral state by blocking the interferon-alpha/beta (IFN-alpha/beta) and IFN-gamma signaling pathways and by blocking the formation of phosphorylated STAT1 and promoting ubiquitin-mediated proteasome-dependent degradation of STAT1. Activates STAT3 leading to cellular transformation. Regulates the activity of cellular genes, including c-myc and c-fos. May repress the promoter of p53, and sequester CREB3 and SP110 isoform 3/Sp110b in the cytoplasm. Represses cell cycle negative regulating factor CDKN1A, thereby interrupting an important check point of normal cell cycle regulation. Targets transcription factors involved in the regulation of inflammatory responses and in the immune response: suppresses TNF-induced NF-kappa-B activation, and activates AP-1. Binds to dendritic cells (DCs) via C1QR1, resulting in down-regulation of T-lymphocytes proliferation. Alters lipid metabolism by interacting with hepatocellular proteins involved in lipid accumulation and storage. Induces up-regulation of FAS promoter activity, and thereby contributes to the increased triglyceride accumulation in hepatocytes (steatosis). Its function is as follows. Forms a heterodimer with envelope glycoprotein E2, which mediates virus attachment to the host cell, virion internalization through clathrin-dependent endocytosis and fusion with host membrane. Fusion with the host cell is most likely mediated by both E1 and E2, through conformational rearrangements of the heterodimer required for fusion rather than a classical class II fusion mechanism. E1/E2 heterodimer binds host apolipoproteins such as APOB and ApoE thereby forming a lipo-viro-particle (LVP). APOE associated to the LVP allows the initial virus attachment to cell surface receptors such as the heparan sulfate proteoglycans (HSPGs), syndecan-1 (SDC1), syndecan-1 (SDC2), the low-density lipoprotein receptor (LDLR) and scavenger receptor class B type I (SCARB1). The cholesterol transfer activity of SCARB1 allows E2 exposure and binding of E2 to SCARB1 and the tetraspanin CD81. E1/E2 heterodimer binding on CD81 activates the epithelial growth factor receptor (EGFR) signaling pathway. Diffusion of the complex E1-E2-EGFR-SCARB1-CD81 to the cell lateral membrane allows further interaction with Claudin 1 (CLDN1) and occludin (OCLN) to finally trigger HCV entry. Forms a heterodimer with envelope glycoprotein E1, which mediates virus attachment to the host cell, virion internalization through clathrin-dependent endocytosis and fusion with host membrane. Fusion with the host cell is most likely mediated by both E1 and E2, through conformational rearrangements of the heterodimer required for fusion rather than a classical class II fusion mechanism. The interaction between envelope glycoprotein E2 and host apolipoprotein E/APOE allows the proper assembly, maturation and infectivity of the viral particles. This interaction is probably promoted via the up-regulation of cellular autophagy by the virus. E1/E2 heterodimer binds host apolipoproteins such as APOB and APOE thereby forming a lipo-viro-particle (LVP). APOE associated to the LVP allows the initial virus attachment to cell surface receptors such as the heparan sulfate proteoglycans (HSPGs), syndecan-1 (SDC1), syndecan-1 (SDC2), the low-density lipoprotein receptor (LDLR) and scavenger receptor class B type I (SCARB1). The cholesterol transfer activity of SCARB1 allows E2 exposure and binding of E2 to SCARB1 and the tetraspanin CD81. E1/E2 heterodimer binding on CD81 activates the epithelial growth factor receptor (EGFR) signaling pathway. Diffusion of the complex E1-E2-EGFR-SCARB1-CD81 to the cell lateral membrane allows further interaction with Claudin 1 (CLDN1) and occludin (OCLN) to finally trigger HCV entry. Inhibits host EIF2AK2/PKR activation, preventing the establishment of an antiviral state. Viral ligand for CD209/DC-SIGN and CLEC4M/DC-SIGNR, which are respectively found on dendritic cells (DCs), and on liver sinusoidal endothelial cells and macrophage-like cells of lymph node sinuses. These interactions allow the capture of circulating HCV particles by these cells and subsequent facilitated transmission to permissive cells such as hepatocytes and lymphocyte subpopulations. The interaction between E2 and host amino acid transporter complex formed by SLC3A2 and SLC7A5/LAT1 may facilitate viral entry into host cell. Functionally, ion channel protein that acts as a viroporin and plays an essential role in the assembly, envelopment and secretion of viral particles. Regulates the host cell secretory pathway, which induces the intracellular retention of viral glycoproteins and favors assembly of viral particles. Creates a pore in acidic organelles and releases Ca(2+) and H(+) in the cytoplasm of infected cells, leading to a productive viral infection. High levels of cytoplasmic Ca(2+) may trigger membrane trafficking and transport of viral ER-associated proteins to viroplasms, sites of viral genome replication. This ionic imbalance induces the assembly of the inflammasome complex, which triggers the maturation of pro-IL-1beta into IL-1beta through the action of caspase-1. Targets also host mitochondria and induces mitochondrial depolarization. In addition of its role as a viroporin, acts as a lipid raft adhesion factor. In terms of biological role, cysteine protease required for the proteolytic auto-cleavage between the non-structural proteins NS2 and NS3. The N-terminus of NS3 is required for the function of NS2 protease (active region NS2-3). Promotes the initiation of viral particle assembly by mediating the interaction between structural and non-structural proteins. Its function is as follows. Displays three enzymatic activities: serine protease with a chymotrypsin-like fold, NTPase and RNA helicase. NS3 serine protease, in association with NS4A, is responsible for the cleavages of NS3-NS4A, NS4A-NS4B, NS4B-NS5A and NS5A-NS5B. The NS3/NS4A complex prevents phosphorylation of host IRF3, thus preventing the establishment of dsRNA induced antiviral state. The NS3/NS4A complex induces host amino acid transporter component SLC3A2, thus contributing to HCV propagation. NS3 RNA helicase binds to RNA and unwinds both dsDNA and dsRNA in the 3' to 5' direction, and likely resolves RNA complicated stable secondary structures in the template strand. Binds a single ATP and catalyzes the unzipping of a single base pair of dsRNA. Inhibits host antiviral proteins TBK1 and IRF3 thereby preventing the establishment of an antiviral state. Cleaves host MAVS/CARDIF thereby preventing the establishment of an antiviral state. Cleaves host TICAM1/TRIF, thereby disrupting TLR3 signaling and preventing the establishment of an antiviral state. Induces a specific membrane alteration that serves as a scaffold for the virus replication complex. This membrane alteration gives rise to the so-called ER-derived membranous web that contains the replication complex. NS4B self-interaction contributes to its function in membranous web formation. Promotes host TRIF protein degradation in a CASP8-dependent manner thereby inhibiting host TLR3-mediated interferon signaling. Disrupts the interaction between STING and TBK1 contributing to the inhibition of interferon signaling. Functionally, phosphorylated protein that is indispensable for viral replication and assembly. Both hypo- and hyperphosphorylated states are required for the viral life cycle. The hyperphosphorylated form of NS5A is an inhibitor of viral replication. Involved in RNA-binding and especially in binding to the viral genome. Zinc is essential for RNA-binding. Participates in the viral particle production as a result of its interaction with the mature viral core protein. Its interaction with host VAPB may target the viral replication complex to vesicles. Down-regulates viral IRES translation initiation. Mediates interferon resistance, presumably by interacting with and inhibiting host EIF2AK2/PKR. Prevents BIN1-induced apoptosis. Acts as a transcriptional activator of some host genes important for viral replication when localized in the nucleus. Via the interaction with host PACSIN2, modulates lipid droplet formation in order to promote virion assembly. Modulates TNFRSF21/DR6 signaling pathway for viral propagation. In terms of biological role, RNA-dependent RNA polymerase that performs primer-template recognition and RNA synthesis during viral replication. Initiates RNA transcription/replication at a flavin adenine dinucleotide (FAD), resulting in a 5'- FAD cap on viral RNAs. In this way, recognition of viral 5' RNA by host pattern recognition receptors can be bypassed, thereby evading activation of antiviral pathways. This chain is Genome polyprotein, found in Hepatitis C virus genotype 6a (isolate 6a33) (HCV).